The chain runs to 309 residues: tRNA pseudouridine synthase B (309 aa).

The active-site Nucleophile is the aspartate 40.

This sequence belongs to the pseudouridine synthase TruB family. Type 1 subfamily.

It catalyses the reaction uridine(55) in tRNA = pseudouridine(55) in tRNA. Functionally, responsible for synthesis of pseudouridine from uracil-55 in the psi GC loop of transfer RNAs. The polypeptide is tRNA pseudouridine synthase B (Mycobacterium avium (strain 104)).